Here is a 268-residue protein sequence, read N- to C-terminus: Thiazole synthase (268 aa).

The active-site Schiff-base intermediate with DXP is the Lys96. 1-deoxy-D-xylulose 5-phosphate is bound by residues Gly157, 185-186 (AG), and 207-208 (NT). The disordered stretch occupies residues 238 to 268 (PMRPREAASPSSPVEGVPFTPTGPRPGRGPQ). Residues 258–268 (PTGPRPGRGPQ) show a composition bias toward pro residues.

It belongs to the ThiG family. In terms of assembly, homotetramer. Forms heterodimers with either ThiH or ThiS.

It is found in the cytoplasm. The catalysed reaction is [ThiS sulfur-carrier protein]-C-terminal-Gly-aminoethanethioate + 2-iminoacetate + 1-deoxy-D-xylulose 5-phosphate = [ThiS sulfur-carrier protein]-C-terminal Gly-Gly + 2-[(2R,5Z)-2-carboxy-4-methylthiazol-5(2H)-ylidene]ethyl phosphate + 2 H2O + H(+). The protein operates within cofactor biosynthesis; thiamine diphosphate biosynthesis. Its function is as follows. Catalyzes the rearrangement of 1-deoxy-D-xylulose 5-phosphate (DXP) to produce the thiazole phosphate moiety of thiamine. Sulfur is provided by the thiocarboxylate moiety of the carrier protein ThiS. In vitro, sulfur can be provided by H(2)S. This chain is Thiazole synthase, found in Thermus thermophilus (strain ATCC BAA-163 / DSM 7039 / HB27).